A 347-amino-acid polypeptide reads, in one-letter code: Probable inactive UDP-arabinopyranose mutase 2 (347 aa).

Arg-145 carries an N-linked (Glc...) arginine glycan.

It belongs to the RGP family. As to quaternary structure, heteromers with UAM1 and UAM3. Is not reversibly glycosylated in vitro by UDP-glucose, UDP-xylose and UDP-galactose.

The protein localises to the golgi apparatus. Probable inactive UDP-L-arabinose mutase. Inactive in vitro, but associates with UAM1 and UAM3. The chain is Probable inactive UDP-arabinopyranose mutase 2 from Oryza sativa subsp. japonica (Rice).